Reading from the N-terminus, the 532-residue chain is Cytochrome P450 12b1, mitochondrial (532 aa).

C480 contacts heme.

It belongs to the cytochrome P450 family. It depends on heme as a cofactor.

It is found in the mitochondrion. Its function is as follows. Probably involved in steroid hormones biosynthesis. In Drosophila acanthoptera (Fruit fly), this protein is Cytochrome P450 12b1, mitochondrial (Cyp12b1).